The following is a 442-amino-acid chain: Protein translocase subunit SecY (442 aa).

10 helical membrane passes run 29–49, 69–89, 126–146, 153–173, 182–202, 217–237, 274–294, 320–340, 377–397, and 400–420; these read LITIGLLILVRVGIFIPVPDI, IFTGGGLSTVGIFALGILPYI, YIAFGWCIIQGLGLTVGLLRP, PLFIFQTVLAITAGSMFVMWI, IGNGASLLIFVNIVATLPQTL, ITAVVLLMLVFLVMIVGIVFV, VMPIIFASAVLILPSSLAGFA, VYTVVYSVMIFFFSYFYASLI, LTFLGAIFLSFVATLPIFVEQ, and GVTTFQGLGATSLLILVGVAI.

It belongs to the SecY/SEC61-alpha family. In terms of assembly, component of the Sec protein translocase complex. Heterotrimer consisting of SecY, SecE and SecG subunits. The heterotrimers can form oligomers, although 1 heterotrimer is thought to be able to translocate proteins. Interacts with the ribosome. Interacts with SecDF, and other proteins may be involved. Interacts with SecA.

The protein resides in the cell inner membrane. The protein localises to the cellular thylakoid membrane. The central subunit of the protein translocation channel SecYEG. Consists of two halves formed by TMs 1-5 and 6-10. These two domains form a lateral gate at the front which open onto the bilayer between TMs 2 and 7, and are clamped together by SecE at the back. The channel is closed by both a pore ring composed of hydrophobic SecY resides and a short helix (helix 2A) on the extracellular side of the membrane which forms a plug. The plug probably moves laterally to allow the channel to open. The ring and the pore may move independently. The chain is Protein translocase subunit SecY from Synechocystis sp. (strain ATCC 27184 / PCC 6803 / Kazusa).